The sequence spans 486 residues: Galactose-1-phosphate uridylyltransferase (486 aa).

It belongs to the galactose-1-phosphate uridylyltransferase type 2 family.

It localises to the cytoplasm. It carries out the reaction alpha-D-galactose 1-phosphate + UDP-alpha-D-glucose = alpha-D-glucose 1-phosphate + UDP-alpha-D-galactose. It participates in carbohydrate metabolism; galactose metabolism. The protein is Galactose-1-phosphate uridylyltransferase of Lacticaseibacillus casei (strain BL23) (Lactobacillus casei).